The chain runs to 470 residues: 3-isopropylmalate dehydratase large subunit (470 aa).

3 residues coordinate [4Fe-4S] cluster: C347, C407, and C410.

It belongs to the aconitase/IPM isomerase family. LeuC type 1 subfamily. Heterodimer of LeuC and LeuD. [4Fe-4S] cluster is required as a cofactor.

It carries out the reaction (2R,3S)-3-isopropylmalate = (2S)-2-isopropylmalate. The protein operates within amino-acid biosynthesis; L-leucine biosynthesis; L-leucine from 3-methyl-2-oxobutanoate: step 2/4. In terms of biological role, catalyzes the isomerization between 2-isopropylmalate and 3-isopropylmalate, via the formation of 2-isopropylmaleate. The polypeptide is 3-isopropylmalate dehydratase large subunit (Shewanella amazonensis (strain ATCC BAA-1098 / SB2B)).